We begin with the raw amino-acid sequence, 541 residues long: Light-independent protochlorophyllide reductase subunit B (541 aa).

Residue Asp36 participates in [4Fe-4S] cluster binding. Catalysis depends on Asp290, which acts as the Proton donor. Residue 425–426 (GL) coordinates substrate.

This sequence belongs to the ChlB/BchB/BchZ family. As to quaternary structure, protochlorophyllide reductase is composed of three subunits; ChlL, ChlN and ChlB. Forms a heterotetramer of two ChlB and two ChlN subunits. Requires [4Fe-4S] cluster as cofactor.

It catalyses the reaction chlorophyllide a + oxidized 2[4Fe-4S]-[ferredoxin] + 2 ADP + 2 phosphate = protochlorophyllide a + reduced 2[4Fe-4S]-[ferredoxin] + 2 ATP + 2 H2O. It participates in porphyrin-containing compound metabolism; chlorophyll biosynthesis (light-independent). Component of the dark-operative protochlorophyllide reductase (DPOR) that uses Mg-ATP and reduced ferredoxin to reduce ring D of protochlorophyllide (Pchlide) to form chlorophyllide a (Chlide). This reaction is light-independent. The NB-protein (ChlN-ChlB) is the catalytic component of the complex. The protein is Light-independent protochlorophyllide reductase subunit B of Synechococcus sp. (strain CC9902).